The chain runs to 391 residues: Na(+)/H(+) antiporter NhaA 1 (391 aa).

Transmembrane regions (helical) follow at residues 19–39, 56–76, 98–118, 128–148, 157–177, 180–200, 208–228, 264–284, 297–317, 335–355, and 364–384; these read FLAS…AALI, VWLG…IFFL, ALPG…YIAI, GWAI…SLLG, VFLA…IAFF, SGLN…LIAL, LLPY…SGVH, VAFA…LSGI, VALG…VLAI, GVAI…NLAF, and EVKV…ILLL.

The protein belongs to the NhaA Na(+)/H(+) (TC 2.A.33) antiporter family.

The protein resides in the cell inner membrane. It carries out the reaction Na(+)(in) + 2 H(+)(out) = Na(+)(out) + 2 H(+)(in). In terms of biological role, na(+)/H(+) antiporter that extrudes sodium in exchange for external protons. The sequence is that of Na(+)/H(+) antiporter NhaA 1 from Pseudomonas savastanoi pv. phaseolicola (strain 1448A / Race 6) (Pseudomonas syringae pv. phaseolicola (strain 1448A / Race 6)).